Reading from the N-terminus, the 1589-residue chain is Paternally-expressed gene 3 protein (1589 aa).

Residues 46 to 128 (HQRFRNLIYV…TLLENYKEMY (83 aa)) form the SCAN box domain. 3 disordered regions span residues 128 to 230 (YQPE…ESYQ), 266 to 306 (DGHS…RRGI), and 319 to 349 (KFIK…MSDD). The span at 129 to 142 (QPEDDNNSDVTSDD) shows a compositional bias: acidic residues. 4 stretches are compositionally biased toward basic and acidic residues: residues 143–152 (DMTRNRRESS), 161–182 (SGDR…DRWS), 206–225 (FEMD…RSQD), and 295–306 (PEAKKSTHRRGI). C2H2-type zinc fingers lie at residues 454-476 (YVCD…QIMH), 507-529 (FECK…RKIH), and 565-587 (YECR…QKIH). Residues 588 to 607 (FGDDKDNEREHERERERGET) are compositionally biased toward basic and acidic residues. A disordered region spans residues 588-610 (FGDDKDNEREHERERERGETFRP). The segment at 627–649 (YECKVCGETFLHSSSLKEHQKIH) adopts a C2H2-type 4 zinc-finger fold. Positions 838-930 (LVASKPPRSH…EFSVPSSNVR (93 aa)) are disordered. A compositionally biased stretch (basic and acidic residues) spans 868–881 (LNDKRQKIPARENP). The C2H2-type 5 zinc finger occupies 969-991 (YECQECGECFAHSSDLTEHQKIH). The segment at 1056–1104 (EKSHGEESQGENTDGEETHSEETHGQETIEDPVIQSSDMEDPQKDDPDD) is disordered. The span at 1071–1082 (EETHSEETHGQE) shows a compositional bias: basic and acidic residues. 5 consecutive C2H2-type zinc fingers follow at residues 1107–1129 (YECE…QKVH), 1163–1185 (YECP…QRIH), 1225–1247 (IRCL…MRLH), 1282–1304 (FECA…VTVH), and 1332–1354 (YECK…KELH). Residues 1396 to 1416 (AEPEVEAAEPEVEAAEPEVEA) are compositionally biased toward acidic residues. The disordered stretch occupies residues 1396–1496 (AEPEVEAAEP…GIEDPEEGED (101 aa)). Tandem repeats lie at residues 1398 to 1404 (PEVEAAE), 1405 to 1411 (PEVEAAE), 1412 to 1418 (PEVEAAE), 1419 to 1423 (PNGEA), 1426 to 1430 (PDGEA), 1433 to 1437 (PIGEA), and 1440 to 1444 (PNGEA). Residues 1398-1418 (PEVEAAEPEVEAAEPEVEAAE) form a 3 X 7 AA repeat of P-E-V-E-A-A-E region. The 4 X 5 AA repeat of P-X-G-E-A stretch occupies residues 1419 to 1444 (PNGEAEGPDGEAAEPIGEAGQPNGEA). Acidic residues-rich tracts occupy residues 1450-1467 (DADE…ERAE) and 1476-1496 (PEGD…EGED). 2 consecutive C2H2-type zinc fingers follow at residues 1506–1528 (YDCH…LKTH) and 1565–1587 (FKCD…QNTH).

It belongs to the krueppel C2H2-type zinc-finger protein family. As to quaternary structure, homodimer. Interacts with SIAH1A and SIAH2. Interacts with TRAF2.

Its subcellular location is the nucleus. The protein localises to the cytoplasm. Its function is as follows. Induces apoptosis in cooperation with SIAH1A. Acts as a mediator between p53/TP53 and BAX in a neuronal death pathway that is activated by DNA damage. Acts synergistically with TRAF2 and inhibits TNF induced apoptosis through activation of NF-kappa-B. This is Paternally-expressed gene 3 protein (PEG3) from Gorilla gorilla gorilla (Western lowland gorilla).